Here is a 467-residue protein sequence, read N- to C-terminus: ATP synthase subunit beta (467 aa).

150–157 (GGAGVGKT) lines the ATP pocket.

It belongs to the ATPase alpha/beta chains family. F-type ATPases have 2 components, CF(1) - the catalytic core - and CF(0) - the membrane proton channel. CF(1) has five subunits: alpha(3), beta(3), gamma(1), delta(1), epsilon(1). CF(0) has three main subunits: a(1), b(2) and c(9-12). The alpha and beta chains form an alternating ring which encloses part of the gamma chain. CF(1) is attached to CF(0) by a central stalk formed by the gamma and epsilon chains, while a peripheral stalk is formed by the delta and b chains.

The protein resides in the cell inner membrane. It catalyses the reaction ATP + H2O + 4 H(+)(in) = ADP + phosphate + 5 H(+)(out). Functionally, produces ATP from ADP in the presence of a proton gradient across the membrane. The catalytic sites are hosted primarily by the beta subunits. This is ATP synthase subunit beta from Aliivibrio salmonicida (strain LFI1238) (Vibrio salmonicida (strain LFI1238)).